The sequence spans 276 residues: Diacetylchitobiose uptake system permease protein DasC (276 aa).

6 consecutive transmembrane segments (helical) span residues 14–34 (TAVVLFIGLVFPVYWMFATAF), 74–94 (LIVTVCAVVFSLVIALAGSFA), 105–125 (GFIVGFMLAQMAPWEVMVIAI), 137–157 (SLVPLTLFYMMMILPFTILTL), 186–206 (VILPLLAPGLMSTSMFGFITA), and 241–261 (GATMAASSLFAIPILILFVYL). The region spanning 70–261 (VSNSLIVTVC…IPILILFVYL (192 aa)) is the ABC transmembrane type-1 domain.

It belongs to the binding-protein-dependent transport system permease family. As to quaternary structure, the complex is composed of two ATP-binding proteins (MsiK), two transmembrane proteins (DasB and DasC) and a solute-binding protein (DasA).

The protein localises to the cell membrane. Its function is as follows. Part of the ABC transporter complex DasABC-MsiK involved in N,N'-diacetylchitobiose ((GlcNAc)2) uptake. Responsible for the translocation of the substrate across the membrane. This Streptomyces coelicolor (strain ATCC BAA-471 / A3(2) / M145) protein is Diacetylchitobiose uptake system permease protein DasC.